The following is a 120-amino-acid chain: NAD(P)H-quinone oxidoreductase subunit 3, chloroplastic (120 aa).

The next 3 membrane-spanning stretches (helical) occupy residues 10 to 30 (FWVF…ISGV), 64 to 84 (IFAL…PWAM), and 88 to 108 (VLGV…IVGS).

Belongs to the complex I subunit 3 family. NDH is composed of at least 16 different subunits, 5 of which are encoded in the nucleus.

Its subcellular location is the plastid. The protein resides in the chloroplast thylakoid membrane. It catalyses the reaction a plastoquinone + NADH + (n+1) H(+)(in) = a plastoquinol + NAD(+) + n H(+)(out). The enzyme catalyses a plastoquinone + NADPH + (n+1) H(+)(in) = a plastoquinol + NADP(+) + n H(+)(out). Functionally, NDH shuttles electrons from NAD(P)H:plastoquinone, via FMN and iron-sulfur (Fe-S) centers, to quinones in the photosynthetic chain and possibly in a chloroplast respiratory chain. The immediate electron acceptor for the enzyme in this species is believed to be plastoquinone. Couples the redox reaction to proton translocation, and thus conserves the redox energy in a proton gradient. This chain is NAD(P)H-quinone oxidoreductase subunit 3, chloroplastic, found in Pelargonium hortorum (Common geranium).